The chain runs to 151 residues: Putative calcium-binding protein CML23 (151 aa).

EF-hand domains lie at 2 to 37, 39 to 74, 84 to 119, and 120 to 151; these read VASD…SLGE, MPDE…MEAD, ETCR…LGTH, and LDVA…MMMA. Ca(2+)-binding residues include Asp-15, Asp-17, Asp-19, Lys-21, Glu-26, Asp-52, Asp-54, Asp-56, and Glu-63. Ca(2+)-binding residues include Asp-133, Asn-135, Asp-137, and Glu-144.

In terms of biological role, potential calcium sensor. In Oryza sativa subsp. japonica (Rice), this protein is Putative calcium-binding protein CML23 (CML23).